We begin with the raw amino-acid sequence, 754 residues long: Ribosomal RNA large subunit methyltransferase K/L (754 aa).

Residues Thr-46–Leu-157 form the THUMP domain.

The protein belongs to the methyltransferase superfamily. RlmKL family.

It is found in the cytoplasm. The catalysed reaction is guanosine(2445) in 23S rRNA + S-adenosyl-L-methionine = N(2)-methylguanosine(2445) in 23S rRNA + S-adenosyl-L-homocysteine + H(+). It carries out the reaction guanosine(2069) in 23S rRNA + S-adenosyl-L-methionine = N(2)-methylguanosine(2069) in 23S rRNA + S-adenosyl-L-homocysteine + H(+). Its function is as follows. Specifically methylates the guanine in position 2445 (m2G2445) and the guanine in position 2069 (m7G2069) of 23S rRNA. This Pseudomonas fluorescens (strain ATCC BAA-477 / NRRL B-23932 / Pf-5) protein is Ribosomal RNA large subunit methyltransferase K/L.